Reading from the N-terminus, the 388-residue chain is Subtilisin-like serine protease AsES (388 aa).

Residues 1–15 form the signal peptide; the sequence is MRLSLVLALLPVAFG. Residues 16-105 constitute a propeptide, removed in mature form; sequence APTRRDEPAP…IEQDAIVTLA (90 aa). A Peptidase S8 domain is found at 114 to 388; the sequence is PWGLARISTR…RLAFNGNPSG (275 aa). Residues C141 and C230 are joined by a disulfide bond. Residues D146 and H176 each act as charge relay system in the active site. 2 N-linked (GlcNAc...) asparagine glycosylation sites follow: N232 and N237. A disulfide bond links C285 and C357. The active-site Charge relay system is S331.

This sequence belongs to the peptidase S8 family.

It is found in the secreted. With respect to regulation, the elicitor proteolytic activity is completely inhibited by PMSF. The activity is also significantly reduced by aprotinin (leading to 37% residual activity), by leupeptin (leading to 54% residual activity), by the ovomucoid trypsin inhibitor (leading to 65% residual activity), and by p-aminobenzamidine (leading to 26% residual activity). Extracellular elicitor protein that induces a strong defense response in strawberry and confers both local and systemic plant resistance against the fungal pathogen Colletotricum acutatum, the casual agent of anthracnose disease. AsES activates a cascade of defense responses, including calcium influx, oxidative burst, hypersensitive cell-death response (HR), accumulation of autofluorescent compounds, cell-wall reinforcement with callose and lignin deposition, salicylic acid accumulation, and expression of defense-related genes, such as PR1, PG1, MYB30, RBOH-D, RBOH-F, CHI23, and FLS. The oxidative burst consists in a progressive extracellular accumulation of H(2)O(2) that starts immediately after the contact with AsES and is preceded by a rapid and transient cell membrane depolarization. During this phase takes place also a rapid intracellular accumulation of NO at the chloroplasts. After the first extracellular H(2)O(2) production phase, two intracellular H(2)O(2) accumulation events occur, the first 2 hours after induction, and the second 7 hours after induction. AsES also produces a transient increase of ion leakage, and a progressive alkalinization of the extracellular medium. Confers also local and systemic plant resistance against Botrytis cinerea in Arabidopsis thaliana. Systemic, but not local resistance is dependent on the length of exposure to AsES. The protection to B.cinerea is due to the induction of the plant defenses via the salicylic acid, jasmonic acid and ethylene signaling pathways. Exhibits subtilisin-like proteolytic activity which is necessary but not sufficient for its elicitor function in strawberry plants. Probably induces defense by means of proteolysis of one or multiple host proteins that are specific targets of this protease. The sequence is that of Subtilisin-like serine protease AsES from Sarocladium strictum (Black bundle disease fungus).